Reading from the N-terminus, the 167-residue chain is Urease accessory protein UreE (167 aa).

This sequence belongs to the UreE family.

It localises to the cytoplasm. Functionally, involved in urease metallocenter assembly. Binds nickel. Probably functions as a nickel donor during metallocenter assembly. In Pseudomonas aeruginosa (strain UCBPP-PA14), this protein is Urease accessory protein UreE.